A 129-amino-acid polypeptide reads, in one-letter code: 3-aminoacrylate deaminase RutC (129 aa).

The protein belongs to the RutC family.

It carries out the reaction (Z)-3-aminoacrylate + H2O + H(+) = 3-oxopropanoate + NH4(+). Functionally, involved in pyrimidine catabolism. Catalyzes the deamination of 3-aminoacrylate to malonic semialdehyde, a reaction that can also occur spontaneously. RutC may facilitate the reaction and modulate the metabolic fitness, rather than catalyzing essential functions. This Caulobacter segnis (strain ATCC 21756 / DSM 7131 / JCM 7823 / NBRC 15250 / LMG 17158 / TK0059) (Mycoplana segnis) protein is 3-aminoacrylate deaminase RutC.